Reading from the N-terminus, the 83-residue chain is MAVKERVGTVVSDKMEKTVVVAVENRFPHPIYKKTVSRTTRYKVHDEDNRCQVGDRVRITETRPLSRSKRWAVAEIMTTKSGS.

It belongs to the universal ribosomal protein uS17 family. In terms of assembly, part of the 30S ribosomal subunit.

Its function is as follows. One of the primary rRNA binding proteins, it binds specifically to the 5'-end of 16S ribosomal RNA. This chain is Small ribosomal subunit protein uS17, found in Synechococcus sp. (strain RCC307).